The primary structure comprises 1592 residues: Probable serine/threonine-protein kinase DDB_G0293958 (1592 aa).

One can recognise a Protein kinase 1 domain in the interval 1–302 (MTGFEIFKKK…CLNYLKEKLI (302 aa)). ATP-binding positions include 2 to 10 (TGFEIFKKK) and K43. D158 acts as the Proton acceptor in catalysis. Disordered regions lie at residues 348–402 (INNN…NNNN), 455–526 (FNDI…SNYN), and 837–867 (KNNNNFYNNNNNNNNNNNNNNNNNNNSNDKS). A compositionally biased stretch (low complexity) spans 349-402 (NNNNNNNNNNNNNNNNNNNNNNNNNNNNNNNNNNNNNNNNNNNNNNNNNNNNNN). Residues 461–518 (STTGEEEEEEKKDNLKRQNENNQIEQEDKGEKHLKETLNNNNNNNNNNNNNNNNNNNN) are a coiled coil. Residues 486–496 (QEDKGEKHLKE) are compositionally biased toward basic and acidic residues. Low complexity-rich tracts occupy residues 499 to 526 (NNNNNNNNNNNNNNNNNNNNNNNNSNYN) and 837 to 864 (KNNNNFYNNNNNNNNNNNNNNNNNNNSN). In terms of domain architecture, Protein kinase 2 spans 1342 to 1592 (LGTYNLIGDS…KELIECLNKL (251 aa)). Residues 1348–1356 (IGDSVFRNI) and K1376 each bind ATP. Catalysis depends on D1474, which acts as the Proton acceptor.

Belongs to the protein kinase superfamily. Ser/Thr protein kinase family.

It carries out the reaction L-seryl-[protein] + ATP = O-phospho-L-seryl-[protein] + ADP + H(+). The catalysed reaction is L-threonyl-[protein] + ATP = O-phospho-L-threonyl-[protein] + ADP + H(+). The polypeptide is Probable serine/threonine-protein kinase DDB_G0293958 (Dictyostelium discoideum (Social amoeba)).